Here is a 266-residue protein sequence, read N- to C-terminus: Vitamin B12-binding protein (266 aa).

Positions Met1–Ala22 are cleaved as a signal peptide. Residues Arg25–Asp266 form the Fe/B12 periplasmic-binding domain. Cyanocob(III)alamin-binding positions include Tyr50 and Asp242–Arg246. Cys183 and Cys259 are oxidised to a cystine.

This sequence belongs to the BtuF family. The complex is composed of two ATP-binding proteins (BtuD), two transmembrane proteins (BtuC) and a solute-binding protein (BtuF).

The protein localises to the periplasm. Its function is as follows. Part of the ABC transporter complex BtuCDF involved in vitamin B12 import. Binds vitamin B12 and delivers it to the periplasmic surface of BtuC. This is Vitamin B12-binding protein from Escherichia coli O6:H1 (strain CFT073 / ATCC 700928 / UPEC).